Consider the following 193-residue polypeptide: Phosphoheptose isomerase (193 aa).

Residues 37-193 (LANAFKAGGK…QLIEKEMADQ (157 aa)) form the SIS domain. A substrate-binding site is contributed by 52 to 54 (NGG). Zn(2+)-binding residues include H61 and E65. Substrate is bound by residues E65, 93–94 (ND), 119–121 (STS), S124, and Q172. The Zn(2+) site is built by Q172 and H180.

Belongs to the SIS family. GmhA subfamily. As to quaternary structure, homotetramer. Requires Zn(2+) as cofactor.

It is found in the cytoplasm. It catalyses the reaction 2 D-sedoheptulose 7-phosphate = D-glycero-alpha-D-manno-heptose 7-phosphate + D-glycero-beta-D-manno-heptose 7-phosphate. It participates in carbohydrate biosynthesis; D-glycero-D-manno-heptose 7-phosphate biosynthesis; D-glycero-alpha-D-manno-heptose 7-phosphate and D-glycero-beta-D-manno-heptose 7-phosphate from sedoheptulose 7-phosphate: step 1/1. Functionally, catalyzes the isomerization of sedoheptulose 7-phosphate in D-glycero-D-manno-heptose 7-phosphate. The chain is Phosphoheptose isomerase from Pectobacterium atrosepticum (strain SCRI 1043 / ATCC BAA-672) (Erwinia carotovora subsp. atroseptica).